The sequence spans 366 residues: Peptide chain release factor 1 (366 aa).

Gln-239 bears the N5-methylglutamine mark.

This sequence belongs to the prokaryotic/mitochondrial release factor family. Methylated by PrmC. Methylation increases the termination efficiency of RF1.

It is found in the cytoplasm. Its function is as follows. Peptide chain release factor 1 directs the termination of translation in response to the peptide chain termination codons UAG and UAA. In Albidiferax ferrireducens (strain ATCC BAA-621 / DSM 15236 / T118) (Rhodoferax ferrireducens), this protein is Peptide chain release factor 1.